Reading from the N-terminus, the 452-residue chain is Cobyrinate a,c-diamide synthase (452 aa).

The GATase cobBQ-type domain occupies 248-441; it reads RVAYALDAAF…LHIHFYQNLA (194 aa). Catalysis depends on C330, which acts as the Nucleophile.

It belongs to the CobB/CbiA family. Mg(2+) is required as a cofactor.

The enzyme catalyses cob(II)yrinate + 2 L-glutamine + 2 ATP + 2 H2O = cob(II)yrinate a,c diamide + 2 L-glutamate + 2 ADP + 2 phosphate + 2 H(+). The protein operates within cofactor biosynthesis; adenosylcobalamin biosynthesis; cob(II)yrinate a,c-diamide from sirohydrochlorin (anaerobic route): step 10/10. Its function is as follows. Catalyzes the ATP-dependent amidation of the two carboxylate groups at positions a and c of cobyrinate, using either L-glutamine or ammonia as the nitrogen source. The chain is Cobyrinate a,c-diamide synthase from Listeria monocytogenes serovar 1/2a (strain ATCC BAA-679 / EGD-e).